Here is a 642-residue protein sequence, read N- to C-terminus: Uromodulin (642 aa).

Residues 1–24 (MGIPLTWMLLVMMVTSWFTLAEAS) form the signal peptide. N-linked (GlcNAc...) asparagine glycosylation is found at N25 and N38. An EGF-like 1 domain is found at 28–64 (EARRCSECHNNATCTVDGVVTTCSCQTGFTGDGLVCE). Intrachain disulfides connect C32–C41, C35–C50, C52–C63, C69–C82, C77–C91, C93–C105, C111–C125, C119–C134, C136–C147, C149–C160, C154–C171, C175–C268, C196–C283, C218–C256, C224–C288, C249–C257, C298–C307, C301–C316, C318–C348, C336–C426, and C367–C390. The 42-residue stretch at 65-106 (DMDECATPWTHNCSNSSCVNTPGSFKCSCQDGFRLTPELSCT) folds into the EGF-like 2; calcium-binding domain. Residues N76 and N79 are each glycosylated (N-linked (GlcNAc...) asparagine). The 42-residue stretch at 107 to 148 (DVDECSEQGLSNCHALATCVNTEGDYLCVCPEGFTGDGWYCE) folds into the EGF-like 3; calcium-binding domain. The tract at residues 149–172 (CSPGSCEPGLDCLPQGPDGKLVCQ) is beta hairpin. Positions 173 to 292 (DPCNTYETLT…CNLAYCTDPS (120 aa)) are D10C. N233 is a glycosylation site (N-linked (GlcNAc...) asparagine). An N-linked (GlcNAc...) asparagine glycan is attached at N276. The 32-residue stretch at 293-324 (SVEGTCEECRVDEDCISDNGRWRCQCKQDSNI) folds into the EGF-like 4 domain. The N-linked (GlcNAc...) asparagine glycan is linked to N323. A ZP-N region spans residues 335–430 (ECGANDIKMS…RMNFECSYPL (96 aa)). In terms of domain architecture, ZP spans 335-590 (ECGANDIKMS…PTCSGTRFRS (256 aa)). N397 and N448 each carry an N-linked (GlcNAc...) asparagine glycan. The tract at residues 431 to 454 (DMKVSLKTSLQPMVSALNISLGGT) is flexible ZP-N/ZP-C linker; important for secretion and polymerization into filaments. Residues 455–465 (GKFTVRMALFQ) form an internal hydrophobic patch (IHP) region. Positions 455 to 590 (GKFTVRMALF…PTCSGTRFRS (136 aa)) are ZP-C. 3 disulfides stabilise this stretch: C507–C567, C528–C583, and C572–C579. An N-linked (GlcNAc...) asparagine glycan is attached at N514. An essential for cleavage by HPN region spans residues 587–590 (RFRS). The segment at 599–607 (VLNLGPITR) is external hydrophobic patch (EHP); regulates polymerization into filaments. A618 carries GPI-anchor amidated alanine lipidation. A propeptide spans 619 to 642 (SSNLRLLSIWLLLFPSATLIFMVQ) (removed in mature form).

In terms of assembly, homodimer that then polymerizes into long filaments. The filaments can additionally assemble laterally to form a sheet. The filaments consist of a zigzag-shaped backbone with laterally protruding arms which interact with bacterial adhesin fimH. Two fimH molecules can bind to a single UMOD monomer. In terms of processing, N-glycosylated. Proteolytically cleaved at a conserved C-terminal proteolytic cleavage site to generate the secreted form found in urine. This cleavage is catalyzed by HPN. As to expression, detected in urine (secreted form). Detected in kidney thick ascending limb epithelial cells (at protein level).

The protein resides in the secreted. The protein localises to the apical cell membrane. It localises to the basolateral cell membrane. Its subcellular location is the cell projection. It is found in the cilium membrane. In terms of biological role, functions in biogenesis and organization of the apical membrane of epithelial cells of the thick ascending limb of Henle's loop (TALH), where it promotes formation of complex filamentous gel-like structure that may play a role in the water barrier permeability. May serve as a receptor for binding and endocytosis of cytokines (IL-1, IL-2) and TNF. Facilitates neutrophil migration across renal epithelia. Functionally, in the urine, may contribute to colloid osmotic pressure, retards passage of positively charged electrolytes and inhibits formation of liquid containing supersaturated salts and subsequent formation of salt crystals. Protects against urinary tract infections by binding to type 1 fimbriated E.coli. Binds to the bacterial adhesin fimH which mediates the stable formation of bacterial aggregates, prevents the binding of E.coli to uroplakins UPK1A and UPK1B which act as urothelial receptors for type I fimbriae, and allows for pathogen clearance through micturation. Also promotes aggregation of other bacteria including K.pneumoniae, P.aeruginosa and S.mitis and so may also protect against other uropathogens. The sequence is that of Uromodulin (Umod) from Mus musculus (Mouse).